The sequence spans 370 residues: Molybdenum import ATP-binding protein ModC (370 aa).

The region spanning 2–233 is the ABC transporter domain; it reads SVRVDIGHRL…LDLLPAEERG (232 aa). Residue 31–38 coordinates ATP; it reads GPSGSGKT. The 67-residue stretch at 293 to 359 folds into the Mop domain; it reads GLSALNILPG…VKTVSFDRAN (67 aa).

This sequence belongs to the ABC transporter superfamily. Molybdate importer (TC 3.A.1.8) family. As to quaternary structure, the complex is composed of two ATP-binding proteins (ModC), two transmembrane proteins (ModB) and a solute-binding protein (ModA).

The protein localises to the cell inner membrane. The enzyme catalyses molybdate(out) + ATP + H2O = molybdate(in) + ADP + phosphate + H(+). Its function is as follows. Part of the ABC transporter complex ModABC involved in molybdenum import. Responsible for energy coupling to the transport system. The chain is Molybdenum import ATP-binding protein ModC from Mesorhizobium japonicum (strain LMG 29417 / CECT 9101 / MAFF 303099) (Mesorhizobium loti (strain MAFF 303099)).